The sequence spans 51 residues: Protein I177L (51 aa).

An N-linked (GlcNAc...) asparagine; by host glycan is attached at asparagine 11.

The protein belongs to the asfivirus I177L family.

The protein localises to the virion. In Ornithodoros (relapsing fever ticks), this protein is Protein I177L.